The primary structure comprises 347 residues: UDP-N-acetylenolpyruvoylglucosamine reductase (347 aa).

One can recognise an FAD-binding PCMH-type domain in the interval 27–197 (LPARAQRLAR…TGIELRLNKM (171 aa)). Arg-173 is an active-site residue. Ser-247 serves as the catalytic Proton donor. The active site involves Glu-342.

Belongs to the MurB family. It depends on FAD as a cofactor.

It is found in the cytoplasm. It carries out the reaction UDP-N-acetyl-alpha-D-muramate + NADP(+) = UDP-N-acetyl-3-O-(1-carboxyvinyl)-alpha-D-glucosamine + NADPH + H(+). The protein operates within cell wall biogenesis; peptidoglycan biosynthesis. Its function is as follows. Cell wall formation. The chain is UDP-N-acetylenolpyruvoylglucosamine reductase from Alcanivorax borkumensis (strain ATCC 700651 / DSM 11573 / NCIMB 13689 / SK2).